The primary structure comprises 87 residues: Glutaredoxin 1 (87 aa).

The region spanning 1 to 87 (MFTVIFGRPG…WAKENLNLFA (87 aa)) is the Glutaredoxin domain. Cys-11 and Cys-14 are oxidised to a cystine.

It belongs to the glutaredoxin family. In terms of assembly, monomer.

Functionally, the disulfide bond functions as an electron carrier in the glutathione-dependent synthesis of deoxyribonucleotides by the enzyme ribonucleotide reductase. In addition, it is also involved in reducing some disulfides in a coupled system with glutathione reductase. In Salmonella typhi, this protein is Glutaredoxin 1 (grxA).